The chain runs to 443 residues: Trigger factor (443 aa).

The region spanning 169 to 254 (GDIAFLDFSG…LNSIKEVQLP (86 aa)) is the PPIase FKBP-type domain.

Belongs to the FKBP-type PPIase family. Tig subfamily.

Its subcellular location is the cytoplasm. It catalyses the reaction [protein]-peptidylproline (omega=180) = [protein]-peptidylproline (omega=0). In terms of biological role, involved in protein export. Acts as a chaperone by maintaining the newly synthesized protein in an open conformation. Functions as a peptidyl-prolyl cis-trans isomerase. The sequence is that of Trigger factor from Mycoplasmoides gallisepticum (strain R(low / passage 15 / clone 2)) (Mycoplasma gallisepticum).